Consider the following 599-residue polypeptide: Elongation factor 4 (599 aa).

A tr-type G domain is found at 2–184; sequence KNIRNFSIIA…RLVRDIPPPE (183 aa). GTP-binding positions include 14–19 and 131–134; these read DHGKST and NKID.

It belongs to the TRAFAC class translation factor GTPase superfamily. Classic translation factor GTPase family. LepA subfamily.

The protein resides in the cell inner membrane. The enzyme catalyses GTP + H2O = GDP + phosphate + H(+). Required for accurate and efficient protein synthesis under certain stress conditions. May act as a fidelity factor of the translation reaction, by catalyzing a one-codon backward translocation of tRNAs on improperly translocated ribosomes. Back-translocation proceeds from a post-translocation (POST) complex to a pre-translocation (PRE) complex, thus giving elongation factor G a second chance to translocate the tRNAs correctly. Binds to ribosomes in a GTP-dependent manner. The chain is Elongation factor 4 from Escherichia fergusonii (strain ATCC 35469 / DSM 13698 / CCUG 18766 / IAM 14443 / JCM 21226 / LMG 7866 / NBRC 102419 / NCTC 12128 / CDC 0568-73).